Reading from the N-terminus, the 278-residue chain is Ras-related protein Rab-40B (278 aa).

Positions 23, 26, and 27 each coordinate GTP. Residues 41–49 (SPYGHPAGI) are switch-I. Aspartate 69 lines the Mg(2+) pocket. GTP contacts are provided by glycine 72, asparagine 126, and arginine 127. A switch-II region spans residues 72–88 (GQGRFCTIFRSYSRGAQ). Residues 175-228 (LLRHGMDRLWRPSKVLSLQELCCRAVVSCTPGHLVDKLPLPVALRSHLKSFSMA) form the SOCS box domain. Positions 245 to 278 (ANSSHKRNSFRKVRTIRPPQSPPRNCARNSCKIS) are disordered. The span at 248–259 (SHKRNSFRKVRT) shows a compositional bias: basic residues. Residue cysteine 270 is the site of S-palmitoyl cysteine attachment. Cysteine 275 is lipidated: S-geranylgeranyl cysteine.

This sequence belongs to the small GTPase superfamily. Rab family. Component of the cullin-5-RING E3 ubiquitin-protein ligase complex (ECS(RAB40B) complex) composed of CUL5, Elongin BC (ELOB and ELOC), RNF7/RBX2 and RAB40B; RAB40B interaction with ECS complex is GTP-independent. Binds (GTP-bound) LIMA1; interaction promotes LIMA1 subcellular localization in lamellipodia during cell migration. Interacts (GTP-bound) with TKS5/SH3PXD2A (via PX domain); interaction promotes invadopodia-mediated extracellular matrix degradation. Mg(2+) is required as a cofactor.

The protein resides in the cell membrane. It is found in the cytoplasm. The protein localises to the cytosol. Its subcellular location is the cell projection. It localises to the lamellipodium membrane. The protein resides in the ruffle. It catalyses the reaction GTP + H2O = GDP + phosphate + H(+). The protein operates within protein modification; protein ubiquitination. With respect to regulation, regulated by guanine nucleotide exchange factors (GEFs) which promote the exchange of bound GDP for free GTP. Regulated by GTPase activating proteins (GAPs) which increase the GTP hydrolysis activity. Inhibited by GDP dissociation inhibitors (GDIs). In terms of biological role, RAB40B small GTPase acts as substrate-recognition components of the ECS(RAB40B) E3 ubiquitin ligase complex which mediates the ubiquitination of target proteins. The Rab40 subfamily belongs to the Rab family that are key regulators of intracellular membrane trafficking, from the formation of transport vesicles to their fusion with membranes. Rabs cycle between an inactive GDP-bound form and an active GTP-bound form that is able to recruit to membranes different sets of downstream effectors directly responsible for vesicle formation, movement, tethering and fusion. As part of the ECS(RAB40B) complex, GTP-bound RAB40B promotes LIMA1/EPLIN ubiquitination and degradation, thereby regulating leading-edge actin dynamics during cell migration. As part of the ECS(RAB40B) complex, GTP-bound RAB40B also ubiquitinates RAP2A GTPase which promotes its localization to lamellipodia and activation to drive cell migration. The ECS(RAB40B) complex does not mediate canonical ubiquitin-dependent degradation of RAP2. RAB40B also binds TKS5/SH3PXD2A effector independently from ECS complex to promote invadopodia-mediated extracellular matrix degradation. The sequence is that of Ras-related protein Rab-40B from Mus musculus (Mouse).